The primary structure comprises 446 residues: Methionine aminopeptidase 2 (446 aa).

Residues 1 to 91 (MAAQVTDALK…PPRVLLSNLF (91 aa)) are disordered. The segment covering 36-48 (EAEDSDDEEEEPV) has biased composition (acidic residues). Residues 59 to 72 (KKKRKRKKKPKKKA) show a composition bias toward basic residues. Residue H199 participates in substrate binding. A divalent metal cation contacts are provided by D219, D230, and H299. A substrate-binding site is contributed by H307. A divalent metal cation-binding residues include E332 and E427.

This sequence belongs to the peptidase M24A family. Methionine aminopeptidase eukaryotic type 2 subfamily. Co(2+) is required as a cofactor. It depends on Zn(2+) as a cofactor. The cofactor is Mn(2+). Requires Fe(2+) as cofactor.

The protein localises to the cytoplasm. The catalysed reaction is Release of N-terminal amino acids, preferentially methionine, from peptides and arylamides.. Functionally, cotranslationally removes the N-terminal methionine from nascent proteins. The N-terminal methionine is often cleaved when the second residue in the primary sequence is small and uncharged (Met-Ala-, Cys, Gly, Pro, Ser, Thr, or Val). The polypeptide is Methionine aminopeptidase 2 (Sclerotinia sclerotiorum (strain ATCC 18683 / 1980 / Ss-1) (White mold)).